The primary structure comprises 166 residues: Putative peptidyl-prolyl cis-trans isomerase dodo (166 aa).

Positions 5–39 (EQLPDGWEKRTSRSTGMSYYLNMYTKESQWDQPTE) constitute a WW domain. The interval 32 to 53 (SQWDQPTEPAKKAGGGSAGGGD) is disordered. Residues 44–53 (AGGGSAGGGD) are compositionally biased toward gly residues. One can recognise a PpiC domain in the interval 55–166 (PDEVHCLHLL…SGLHIILRKA (112 aa)).

The catalysed reaction is [protein]-peptidylproline (omega=180) = [protein]-peptidylproline (omega=0). This chain is Putative peptidyl-prolyl cis-trans isomerase dodo (dod), found in Drosophila melanogaster (Fruit fly).